The following is a 233-amino-acid chain: Orotidine 5'-phosphate decarboxylase (233 aa).

Substrate is bound by residues Asp12, Lys34, Asp61–Thr70, Thr120, Arg181, Gln190, Gly210, and Arg211. The active-site Proton donor is Lys63.

Belongs to the OMP decarboxylase family. Type 1 subfamily. As to quaternary structure, homodimer.

It catalyses the reaction orotidine 5'-phosphate + H(+) = UMP + CO2. The protein operates within pyrimidine metabolism; UMP biosynthesis via de novo pathway; UMP from orotate: step 2/2. In terms of biological role, catalyzes the decarboxylation of orotidine 5'-monophosphate (OMP) to uridine 5'-monophosphate (UMP). The protein is Orotidine 5'-phosphate decarboxylase of Hahella chejuensis (strain KCTC 2396).